The following is a 145-amino-acid chain: uncharacterized protein (145 aa).

The protein to R.meliloti R00649.

This is an uncharacterized protein from Agrobacterium fabrum (strain C58 / ATCC 33970) (Agrobacterium tumefaciens (strain C58)).